Reading from the N-terminus, the 395-residue chain is Guanine nucleotide-binding protein subunit beta-5 (395 aa).

WD repeat units follow at residues 103–142 (GHGNKVLCMDWCKDKRRIVSSSQDGKVIVWDSFTTNKEHA), 145–184 (MPCTWVMACAYAPSGCAIACGGLDNKCSVYPLTFDKNENM), 193–234 (MHTN…QSFH), 236–278 (HGAD…QAFE), 279–318 (THESDINSVRYYPSGDAFASGSDDATCRLYDLRADREVAI), 320–362 (SKES…RVSI), and 365–394 (GHENRVSTLRVSPDGTAFCSGSWDHTLRVW).

It belongs to the WD repeat G protein beta family. Component of a complex composed of RGS9 (isoform RGS9-1), GNB5 and RGS9BP; within this complex, the presence of GNB5 stabilizes both itself and RGS9 and increases RGS9 GTPase-activating protein (GAP) activity. Interacts with RGS7, forming the RGS7-GNB5 complex; within this complex, the presence of GNB5 increases RGS7 GTPase-activating protein (GAP) activity. Interacts with GPR158; promotes the GTPase activator activity of the RGS7-GNB5 complex in absence of glycine, in contrast GTPase activator activity of the RGS7-GNB5 complex is inhibited in presence of glycine. Interacts with RGS6. Widely expressed.

It is found in the membrane. Its function is as follows. Enhances GTPase-activating protein (GAP) activity of regulator of G protein signaling (RGS) proteins, such as RGS7 and RGS9, hence involved in the termination of the signaling initiated by the G protein coupled receptors (GPCRs) by accelerating the GTP hydrolysis on the G-alpha subunits, thereby promoting their inactivation. Increases RGS7 GTPase-activating protein (GAP) activity, thereby regulating mood and cognition. Increases RGS9 GTPase-activating protein (GAP) activity, hence contributes to the deactivation of G protein signaling initiated by D(2) dopamine receptors. May play an important role in neuronal signaling, including in the parasympathetic, but not sympathetic, control of heart rate. The chain is Guanine nucleotide-binding protein subunit beta-5 (GNB5) from Homo sapiens (Human).